The primary structure comprises 417 residues: Carbon catabolite repressor protein 4 homolog 4 (417 aa).

Position 2 is an N-acetylserine (phenylalanine 2). A Mg(2+)-binding site is contributed by glutamate 143.

This sequence belongs to the CCR4/nocturin family. Component of the CCR4-NOT complex, at least composed of CRR4 and CAF1 proteins. Forms homooligomers. It depends on Mg(2+) as a cofactor.

The protein localises to the nucleus. The protein resides in the cytoplasm. It catalyses the reaction Exonucleolytic cleavage of poly(A) to 5'-AMP.. Acts as a catalytic component of the CCR4-NOT core complex, which in the nucleus seems to be a general transcription factor, and in the cytoplasm the major mRNA deadenylase involved in mRNA turnover. Transcriptional regulator of circadian rhythms with poly(A)-degrading activity that affects the expression and rhythmicity of the clock core oscillator genes TOC1 and CCA1. Deadenylation may be a mechanism involved in the regulation of the circadian clock. May play a negative role in response against oxidative stress. Possesses magnesium-dependent poly(A)-specific exoribonuclease activity in vitro and is almost inactive with poly(U), poly(C) and poly(G) as substrates. The polypeptide is Carbon catabolite repressor protein 4 homolog 4 (Arabidopsis thaliana (Mouse-ear cress)).